The primary structure comprises 130 residues: Fluoride-specific ion channel FluC (130 aa).

4 helical membrane-spanning segments follow: residues 2 to 22 (GLLL…RFAL), 35 to 55 (IGIL…AAFL), 72 to 92 (LFVT…LDIL), and 107 to 127 (ILVS…FIMG). Na(+) contacts are provided by glycine 79 and threonine 82.

This sequence belongs to the fluoride channel Fluc/FEX (TC 1.A.43) family.

It is found in the cell inner membrane. The enzyme catalyses fluoride(in) = fluoride(out). Na(+) is not transported, but it plays an essential structural role and its presence is essential for fluoride channel function. Fluoride-specific ion channel. Important for reducing fluoride concentration in the cell, thus reducing its toxicity. The chain is Fluoride-specific ion channel FluC from Francisella philomiragia subsp. philomiragia (strain ATCC 25017 / CCUG 19701 / FSC 153 / O#319-036).